The chain runs to 250 residues: MQKKSIIIPALDLIDGNVVRLHQGDYAKQTTYSDNPIEQFASYLAQGAEQLHLVDLTGAKDPAKRQTALIGKIIAETNCQIQVGGGIRTEQDVADLLAVGANRVVIGSTAVKDRAMVKGWFEKYGAEKFVLALDVNIDASGQKIIAISGWQEASGVSLEELIEDYQVVGLQHVLCTDISRDGTLAGSNVNLYREICAKYPKIHFQSSGGIGSLDDIKALKGTGVSGVIVGRALLEGKFNVAEAIECWQNG.

Asp12 functions as the Proton acceptor in the catalytic mechanism. Asp134 functions as the Proton donor in the catalytic mechanism.

It belongs to the HisA/HisF family.

It is found in the cytoplasm. It catalyses the reaction 1-(5-phospho-beta-D-ribosyl)-5-[(5-phospho-beta-D-ribosylamino)methylideneamino]imidazole-4-carboxamide = 5-[(5-phospho-1-deoxy-D-ribulos-1-ylimino)methylamino]-1-(5-phospho-beta-D-ribosyl)imidazole-4-carboxamide. The protein operates within amino-acid biosynthesis; L-histidine biosynthesis; L-histidine from 5-phospho-alpha-D-ribose 1-diphosphate: step 4/9. This Actinobacillus pleuropneumoniae serotype 7 (strain AP76) protein is 1-(5-phosphoribosyl)-5-[(5-phosphoribosylamino)methylideneamino] imidazole-4-carboxamide isomerase.